Reading from the N-terminus, the 2207-residue chain is Desmoplakin-B (2207 aa).

3 coiled-coil regions span residues 506–916 (MEEL…EAGK), 952–1000 (AKHA…EQGR), and 1029–1063 (TERL…LLKN). The segment covering 905 to 924 (KQRQVAEEEAGKRRRTESQL) has biased composition (basic and acidic residues). Residues 905–933 (KQRQVAEEEAGKRRRTESQLEKSSQAMRE) are disordered. 9 Plectin repeats span residues 1369-1406 (LLEA…DKKQ), 1407-1445 (LLIA…TLRL), 1446-1483 (LQAQ…YQAL), 1571-1609 (YLRG…TLEL), 1610-1647 (LEAQ…KDKL), 1685-1723 (LLEA…NQIL), 1783-1811 (IVDP…FLEL), 1992-2029 (LLEA…MANR), and 2068-2106 (FLEF…AQRL). Over residues 2155-2164 (ISSPYNLSNP) the composition is skewed to polar residues. Positions 2155–2207 (ISSPYNLSNPGSASGSRSGSRRGSVDYSLSPSSSSRYSSFSYSRTSFSSRSLS) are disordered. Over residues 2165 to 2207 (GSASGSRSGSRRGSVDYSLSPSSSSRYSSFSYSRTSFSSRSLS) the composition is skewed to low complexity.

Belongs to the plakin or cytolinker family.

Its subcellular location is the cell junction. The protein localises to the desmosome. It is found in the cell membrane. In terms of biological role, involved in the organization of desmosome cell-cell junctions. Of particular importance in cell adhesion in the skin and during cardiac development. May also play a role in the regulation of Wnt, TGF-beta and Hippo signaling pathways. The sequence is that of Desmoplakin-B from Danio rerio (Zebrafish).